Reading from the N-terminus, the 658-residue chain is MGRRRAPAGGSLGRALMRHQTQRSRSHRHTDSWLHTSELNDGYDWGRLNLQSVTEQSSLDDFLATAELAGTEFVAEKLNIKFVPAEARTGLLSFEESQRIKKLHEENKQFLCIPRRPNWNQNTTPEELKQAEKDNFLEWRRQLVRLEEEQKLILTPFERNLDFWRQLWRVIERSDIVVQIVDARNPLLFRCEDLECYVKEMDANKENVILINKADLLTAEQRSAWAMYFEKEDVKVIFWSALAGAIPLNGDSEEEANRDDRQSNTTKFGHSSFDQAEISHSESEHLPARDSPSLSENPTTDEDDSEYEDCPEEEEDDWQTCSEEDGPKEEDCSQDWKESSTADSEARSRKTPQKRQIHNFSHLVSKQELLELFKELHTGRKVKDGQLTVGLVGYPNVGKSSTINTIMGNKKVSVSATPGHTKHFQTLYVEPGLCLCDCPGLVMPSFVSTKAEMTCSGILPIDQMRDHVPPVSLVCQNIPRHVLEATYGINIITPREDEDPHRPPTSEELLTAYGYMRGFMTAHGQPDQPRSARYILKDYVSGKLLYCHPPPGRDPVTFQHQHQRLLENKMNSDEIKMQLGRNKKAKQIENIVDKTFFHQENVRALTKGVQAVMGYKPGSGVVTASTASSENGAGKPWKKHGNRNKKEKSRRLYKHLDM.

The segment at 1-31 is disordered; the sequence is MGRRRAPAGGSLGRALMRHQTQRSRSHRHTD. The segment covering 16–28 has biased composition (basic residues); sequence LMRHQTQRSRSHR. 2 positions are modified to phosphoserine: S93 and S97. In terms of domain architecture, CP-type G spans 164-444; sequence WRQLWRVIER…LCDCPGLVMP (281 aa). 212 to 215 contacts GTP; it reads NKAD. The disordered stretch occupies residues 250–355; the sequence is GDSEEEANRD…ARSRKTPQKR (106 aa). S252 bears the Phosphoserine mark. Positions 263 to 274 are enriched in polar residues; that stretch reads SNTTKFGHSSFD. Residues 277-288 show a composition bias toward basic and acidic residues; it reads EISHSESEHLPA. The span at 299-328 shows a compositional bias: acidic residues; the sequence is TTDEDDSEYEDCPEEEEDDWQTCSEEDGPK. Positions 329–348 are enriched in basic and acidic residues; it reads EEDCSQDWKESSTADSEARS. GTP contacts are provided by residues 393-400 and 437-440; these read GYPNVGKS and DCPG. The disordered stretch occupies residues 623 to 658; it reads TASTASSENGAGKPWKKHGNRNKKEKSRRLYKHLDM. The span at 636–658 shows a compositional bias: basic residues; the sequence is PWKKHGNRNKKEKSRRLYKHLDM.

The protein belongs to the TRAFAC class YlqF/YawG GTPase family. LSG1 subfamily.

It localises to the cytoplasm. The protein localises to the endoplasmic reticulum. It is found in the nucleus. Its subcellular location is the cajal body. It catalyses the reaction GTP + H2O = GDP + phosphate + H(+). Functionally, functions as a GTPase. May act by mediating the release of NMD3 from the 60S ribosomal subunit after export into the cytoplasm during the 60S ribosomal subunit maturation. The sequence is that of Large subunit GTPase 1 homolog (LSG1) from Homo sapiens (Human).